The primary structure comprises 102 residues: Small ribosomal subunit protein uS10 (102 aa).

It belongs to the universal ribosomal protein uS10 family. Part of the 30S ribosomal subunit.

Involved in the binding of tRNA to the ribosomes. The sequence is that of Small ribosomal subunit protein uS10 from Bacillus cereus (strain G9842).